Consider the following 381-residue polypeptide: Cyclin-dependent kinase inhibitor CIP1 (381 aa).

A compositionally biased stretch (basic residues) spans 1–11 (MLLERLHKRLH). Residues 1-30 (MLLERLHKRLHAGSSRRSQENKDKNCKPED) are disordered. A compositionally biased stretch (basic and acidic residues) spans 17–30 (RSQENKDKNCKPED). 3 positions are modified to phosphothreonine: Thr-65, Thr-69, and Thr-73.

In terms of assembly, interact with the CDC28/CLN2 complex. Post-translationally, phosphorylated during S phase in a CDC28-dependent manner. Phosphorylated at Thr-65 and Thr-73 by HOG1 under osmotic stress. The phosphorylations of Thr-65 and Thr-73 are necessary for CIP1-induced growth inhibition.

The protein resides in the cytoplasm. Its subcellular location is the nucleus. Functionally, acts as an inhibitor of the CDC28/CLN2 cyclin-dependent kinase complex. Stabilizes the CDC28 inhibitor SIC1. Negatively regulates the G1/S phase transition. Contributes to osmostress-induced transitory G1 delay. The chain is Cyclin-dependent kinase inhibitor CIP1 from Saccharomyces cerevisiae (strain ATCC 204508 / S288c) (Baker's yeast).